The sequence spans 205 residues: Peptidyl-tRNA hydrolase (205 aa).

Residue Tyr14 participates in tRNA binding. The active-site Proton acceptor is the His19. Residues Tyr68, Asn70, and Asn116 each coordinate tRNA.

The protein belongs to the PTH family. As to quaternary structure, monomer.

It localises to the cytoplasm. It carries out the reaction an N-acyl-L-alpha-aminoacyl-tRNA + H2O = an N-acyl-L-amino acid + a tRNA + H(+). In terms of biological role, hydrolyzes ribosome-free peptidyl-tRNAs (with 1 or more amino acids incorporated), which drop off the ribosome during protein synthesis, or as a result of ribosome stalling. Its function is as follows. Catalyzes the release of premature peptidyl moieties from peptidyl-tRNA molecules trapped in stalled 50S ribosomal subunits, and thus maintains levels of free tRNAs and 50S ribosomes. The sequence is that of Peptidyl-tRNA hydrolase from Caulobacter vibrioides (strain ATCC 19089 / CIP 103742 / CB 15) (Caulobacter crescentus).